A 622-amino-acid polypeptide reads, in one-letter code: Elongation factor 4 (622 aa).

One can recognise a tr-type G domain in the interval 17–201 (ALIRNFCIIA…KVVAEVPAPV (185 aa)). GTP-binding positions include 29–34 (DHGKST) and 148–151 (NKID).

This sequence belongs to the TRAFAC class translation factor GTPase superfamily. Classic translation factor GTPase family. LepA subfamily.

The protein localises to the cell membrane. It carries out the reaction GTP + H2O = GDP + phosphate + H(+). Required for accurate and efficient protein synthesis under certain stress conditions. May act as a fidelity factor of the translation reaction, by catalyzing a one-codon backward translocation of tRNAs on improperly translocated ribosomes. Back-translocation proceeds from a post-translocation (POST) complex to a pre-translocation (PRE) complex, thus giving elongation factor G a second chance to translocate the tRNAs correctly. Binds to ribosomes in a GTP-dependent manner. The protein is Elongation factor 4 of Streptomyces avermitilis (strain ATCC 31267 / DSM 46492 / JCM 5070 / NBRC 14893 / NCIMB 12804 / NRRL 8165 / MA-4680).